Here is a 335-residue protein sequence, read N- to C-terminus: Dihydroorotate dehydrogenase (quinone) (335 aa).

FMN contacts are provided by residues 58–62 (AGADK) and Thr-82. Lys-62 contacts substrate. 107 to 111 (NRNGF) is a binding site for substrate. FMN contacts are provided by Asn-135 and Asn-168. Asn-168 provides a ligand contact to substrate. Ser-171 serves as the catalytic Nucleophile. Residue Asn-173 participates in substrate binding. The FMN site is built by Lys-213 and Gly-241. Residue 242 to 243 (NT) coordinates substrate. Residues Gly-264, Gly-293, and 314 to 315 (YS) contribute to the FMN site.

This sequence belongs to the dihydroorotate dehydrogenase family. Type 2 subfamily. Monomer. It depends on FMN as a cofactor.

Its subcellular location is the cell membrane. The enzyme catalyses (S)-dihydroorotate + a quinone = orotate + a quinol. The protein operates within pyrimidine metabolism; UMP biosynthesis via de novo pathway; orotate from (S)-dihydroorotate (quinone route): step 1/1. In terms of biological role, catalyzes the conversion of dihydroorotate to orotate with quinone as electron acceptor. This Actinobacillus pleuropneumoniae serotype 5b (strain L20) protein is Dihydroorotate dehydrogenase (quinone).